A 214-amino-acid chain; its full sequence is Glycerol-3-phosphate acyltransferase (214 aa).

5 helical membrane passes run 4–24, 52–72, 82–102, 118–138, and 159–179; these read LIVA…IVSA, AAIL…WFVV, ETSV…PVFF, LAIN…VAFF, and FLFG…LLVW.

Belongs to the PlsY family. As to quaternary structure, probably interacts with PlsX.

Its subcellular location is the cell inner membrane. The catalysed reaction is an acyl phosphate + sn-glycerol 3-phosphate = a 1-acyl-sn-glycero-3-phosphate + phosphate. It functions in the pathway lipid metabolism; phospholipid metabolism. In terms of biological role, catalyzes the transfer of an acyl group from acyl-phosphate (acyl-PO(4)) to glycerol-3-phosphate (G3P) to form lysophosphatidic acid (LPA). This enzyme utilizes acyl-phosphate as fatty acyl donor, but not acyl-CoA or acyl-ACP. In Paraburkholderia phytofirmans (strain DSM 17436 / LMG 22146 / PsJN) (Burkholderia phytofirmans), this protein is Glycerol-3-phosphate acyltransferase.